The sequence spans 153 residues: UPF0266 membrane protein YPTB1631 (153 aa).

Helical transmembrane passes span 6–26 (LVLV…EFIM), 45–65 (LDCM…VMAH), and 67–87 (APLT…ISYI).

The protein belongs to the UPF0266 family.

The protein resides in the cell inner membrane. The sequence is that of UPF0266 membrane protein YPTB1631 from Yersinia pseudotuberculosis serotype I (strain IP32953).